The primary structure comprises 394 residues: Dual specificity protein phosphatase 4 (394 aa).

N-acetylvaline is present on Val2. The Rhodanese domain maps to 41 to 159 (SGGKCLLLDC…FSSEYPEFCS (119 aa)). One can recognise a Tyrosine-protein phosphatase domain in the interval 195 to 336 (GPVEILPFLY…LLQFESQVLA (142 aa)). Cys280 (phosphocysteine intermediate) is an active-site residue. 2 positions are modified to phosphoserine; by MAPK: Ser386 and Ser391.

Belongs to the protein-tyrosine phosphatase family. Non-receptor class dual specificity subfamily. Hollow spherical complex composed of 24 subunits with pseudooctahedral symmetry, has a tetramer as the basic unit. Post-translationally, phosphorylation in the C-terminus by ERK1/2 inhibits proteasomal degradation and stabilizes the protein.

The protein localises to the nucleus. It carries out the reaction O-phospho-L-tyrosyl-[protein] + H2O = L-tyrosyl-[protein] + phosphate. It catalyses the reaction O-phospho-L-seryl-[protein] + H2O = L-seryl-[protein] + phosphate. The catalysed reaction is O-phospho-L-threonyl-[protein] + H2O = L-threonyl-[protein] + phosphate. In terms of biological role, regulates mitogenic signal transduction by dephosphorylating both Thr and Tyr residues on MAP kinases ERK1 and ERK2. This chain is Dual specificity protein phosphatase 4 (DUSP4), found in Homo sapiens (Human).